Here is a 360-residue protein sequence, read N- to C-terminus: Alpha-methylacyl-CoA racemase (360 aa).

Substrate-binding positions include R38, 59–62 (ADLK), 83–85 (GYR), R91, and 125–130 (GHDINY). The active-site Proton acceptor is H126. D156 (proton donor) is an active-site residue.

It belongs to the CoA-transferase III family. As to quaternary structure, homodimer.

It carries out the reaction a (2S)-2-methylacyl-CoA = a (2R)-2-methylacyl-CoA. It catalyses the reaction (2S)-2-methyltetradecanoyl-CoA = (2R)-2-methyltetradecanoyl-CoA. The enzyme catalyses (2R)-pristanoyl-CoA = (2S)-pristanoyl-CoA. The catalysed reaction is (25S)-3-oxocholest-4-en-26-oyl-CoA = (25R)-3-oxocholest-4-en-26-oyl-CoA. It carries out the reaction (2S)-ibuprofenoyl-CoA = (2R)-ibuprofenoyl-CoA. With respect to regulation, inactivated by N,N-dialkylcarbamoyl-CoA substrate-product analogs. Its function is as follows. Catalyzes the epimerization of (2R)- and (2S)-methylacyl-coenzyme A (CoA) thioesters. Accepts as substrates a wide range of alpha-methylacyl-CoAs, including (2R)-2-methylmyristoyl-CoA and (2S)-2-methylmyristoyl-CoA, (2R)-pristanoyl-CoA and (2S)-pristanoyl-CoA, and the cholesterol esters (25R)-3-oxo-cholest-4-en-26-oyl-CoA and (25S)-3-oxo-cholest-4-en-26-oyl-CoA. Can also catalyze the interconversion of the non-physiologic substrates (2R)-ibuprofenoyl-CoA and (2S)-ibuprofenoyl-CoA, which are potential competitive inhibitors of the enzyme. This chain is Alpha-methylacyl-CoA racemase, found in Mycobacterium tuberculosis (strain ATCC 25618 / H37Rv).